Consider the following 910-residue polypeptide: Harmonin (910 aa).

Positions 1–86 (MDRKVAREFR…LTPRRSRKLK (86 aa)) are N-terminal domain. 2 PDZ domains span residues 87 to 171 (EVRL…GLIP) and 211 to 295 (KVFI…AGRE). A mediates interaction with MYO7B region spans residues 194-833 (GVRGGLGSPG…KAWNQGGDWI (640 aa)). Residue Ser219 is modified to Phosphoserine. 2 coiled-coil regions span residues 299 to 377 (TDRE…WEED) and 417 to 482 (TIRK…DLEE). Residues 563–688 (VMPHPPSVNS…PPRGPGVSTI (126 aa)) are disordered. Over residues 564 to 582 (MPHPPSVNSPSKVPAPPVL) the composition is skewed to pro residues. Low complexity predominate over residues 583–596 (PSSGHVSSSSSPWV). A compositionally biased stretch (pro residues) spans 599–611 (TPPPIPIPPPPSI). A compositionally biased stretch (polar residues) spans 650–664 (NTHSGKPSSSPTTER). The PDZ 3 domain occupies 752 to 839 (DVRLLRIKKE…GDWIDLVVAV (88 aa)). The tract at residues 890–910 (KSRERNQTDPSWRPASSAPSP) is disordered. The segment covering 899-910 (PSWRPASSAPSP) has biased composition (low complexity).

As to quaternary structure, part of the IMAC/intermicrovillar adhesion complex/intermicrovillar tip-link complex composed of ANKS4B, MYO7B, USH1C, CDHR2 and CDHR5. Part of a complex composed of USH1C, USH1G and MYO7A. Interacts with F-actin. Interacts with USH2A. Interacts with SLC4A7. Interacts (via PDZ1 domain) with the C-terminus of USHBP1. Interacts (via N-terminus and PDZ 2 domain) with CDH23. Interacts with USH1G. Interacts with MYO7B. Interacts with CDHR2 and CDHR5; may mediate their interaction with MYO7B at the microvilli tip. Interacts (via PDZ 1 domain) with ANKS4B. Interacts (via PDZ 1 domain) with DOCK4. Detected in stereocilia of cochlear hair cells (at protein level). Isoform 1 is expressed in the eye, cochlea, vestibule, heart, kidney, small intestine and testis; it is barely visible in skeletal muscle, liver, and lung and is absent from the brain. Isoforms 2 and 3 are expressed in the cochlea and vestibule.

The protein resides in the cytoplasm. It localises to the cytosol. The protein localises to the cytoskeleton. Its subcellular location is the cell projection. It is found in the microvillus. Its function is as follows. Anchoring/scaffolding protein that is a part of the functional network formed by USH1C, USH1G, CDH23 and MYO7A that mediates mechanotransduction in cochlear hair cells. Required for normal development and maintenance of cochlear hair cell bundles. As part of the intermicrovillar adhesion complex/IMAC plays a role in brush border differentiation, controlling microvilli organization and length. Probably plays a central regulatory role in the assembly of the complex, recruiting CDHR2, CDHR5 and MYO7B to the microvilli tips. The sequence is that of Harmonin (Ush1c) from Mus musculus (Mouse).